Reading from the N-terminus, the 492-residue chain is GMP reductase (492 aa).

NADP(+) contacts are provided by residues 30 to 31 and Arg78; that span reads SR. CBS domains are found at residues 99–162 and 164–223; these read LIED…LVET and MTPV…RNAT. Residues 260-262 and 313-314 contribute to the NADP(+) site; these read DIA and VG. K(+)-binding residues include Gly314, Gly316, and Cys319. Cys319 (thioimidate intermediate) is an active-site residue. Thr321 functions as the Proton donor/acceptor in the catalytic mechanism. Arg322 provides a ligand contact to K(+). GMP is bound by residues 352–354, 375–376, and 401–403; these read DGG, GN, and GMA. Residues Met402 and 454-457 each bind NADP(+); that span reads SGIS. Residues 490-492 carry the Microbody targeting signal motif; the sequence is SKL.

Belongs to the IMPDH/GMPR family. GuaC type 1 subfamily. Homotetramer.

The protein resides in the glycosome. The catalysed reaction is IMP + NH4(+) + NADP(+) = GMP + NADPH + 2 H(+). Activated by GTP and inhibited by XMP and the IMP analogs allopurinol nucleotide and thiopurinol nucleotide. Its function is as follows. Catalyzes the irreversible NADPH-dependent deamination of GMP to IMP. It functions in the conversion of nucleobase, nucleoside and nucleotide derivatives of G to A nucleotides, and in maintaining the intracellular balance of A and G nucleotides. In Leishmania donovani, this protein is GMP reductase.